A 154-amino-acid chain; its full sequence is MSVTLDLQLACADTDGLPGEAQLQGWLDGTILGFQEEAEVTVRIVDEAESRELNLTYRGKDKPTNVLSFPFEAPPGMELPLLGDLVICRQVVEQEATEQNKPLEAHWAHMVVHGSLHLLGYDHIEDDEAEEMEQLERDIMQELGFADPYLNDEE.

Zn(2+) is bound by residues histidine 113, histidine 117, and histidine 123.

It belongs to the endoribonuclease YbeY family. The cofactor is Zn(2+).

Its subcellular location is the cytoplasm. In terms of biological role, single strand-specific metallo-endoribonuclease involved in late-stage 70S ribosome quality control and in maturation of the 3' terminus of the 16S rRNA. The sequence is that of Endoribonuclease YbeY from Aeromonas salmonicida (strain A449).